The chain runs to 587 residues: Protein SIX6OS1 (587 aa).

Positions threonine 356–aspartate 378 are disordered. Polar residues predominate over residues proline 357–serine 367. Residues glutamate 368–aspartate 378 show a composition bias toward basic and acidic residues. A Phosphoserine modification is found at serine 439. The disordered stretch occupies residues serine 568–phenylalanine 587.

In terms of assembly, interacts with SYCE1. Interacts with proteasome subunit PSMA8; to participate in meiosis progression during spermatogenesis. Highest expression in retina, skeletal muscle, testis and colon.

It localises to the chromosome. Functionally, meiotic protein that localizes to the central element of the synaptonemal complex and is required for chromosome synapsis during meiotic recombination. Required for the appropriate processing of intermediate recombination nodules before crossover formation. The sequence is that of Protein SIX6OS1 from Homo sapiens (Human).